We begin with the raw amino-acid sequence, 298 residues long: Nucleotide-binding protein RSKD131_3085 (298 aa).

ATP is bound at residue 11-18 (GPSGAGRT). 58 to 61 (DVRN) lines the GTP pocket.

Belongs to the RapZ-like family.

Functionally, displays ATPase and GTPase activities. The chain is Nucleotide-binding protein RSKD131_3085 from Cereibacter sphaeroides (strain KD131 / KCTC 12085) (Rhodobacter sphaeroides).